The following is a 208-amino-acid chain: Holliday junction branch migration complex subunit RuvA (208 aa).

The tract at residues 1-64 (MIGKLKGIVD…EDMIRLYGFR (64 aa)) is domain I. The tract at residues 65–143 (SDAEREWFRL…AFAPVDPALV (79 aa)) is domain II. Residues 144–152 (ALTGAVEDR) form a flexible linker region. The segment at 153–208 (TAPQPVADAISALVNLGYPQVQASAAIAAALKGLGDGAETVEAKTLIRLGLRELAR) is domain III.

The protein belongs to the RuvA family. In terms of assembly, homotetramer. Forms an RuvA(8)-RuvB(12)-Holliday junction (HJ) complex. HJ DNA is sandwiched between 2 RuvA tetramers; dsDNA enters through RuvA and exits via RuvB. An RuvB hexamer assembles on each DNA strand where it exits the tetramer. Each RuvB hexamer is contacted by two RuvA subunits (via domain III) on 2 adjacent RuvB subunits; this complex drives branch migration. In the full resolvosome a probable DNA-RuvA(4)-RuvB(12)-RuvC(2) complex forms which resolves the HJ.

Its subcellular location is the cytoplasm. Functionally, the RuvA-RuvB-RuvC complex processes Holliday junction (HJ) DNA during genetic recombination and DNA repair, while the RuvA-RuvB complex plays an important role in the rescue of blocked DNA replication forks via replication fork reversal (RFR). RuvA specifically binds to HJ cruciform DNA, conferring on it an open structure. The RuvB hexamer acts as an ATP-dependent pump, pulling dsDNA into and through the RuvAB complex. HJ branch migration allows RuvC to scan DNA until it finds its consensus sequence, where it cleaves and resolves the cruciform DNA. The chain is Holliday junction branch migration complex subunit RuvA from Methylorubrum populi (strain ATCC BAA-705 / NCIMB 13946 / BJ001) (Methylobacterium populi).